Here is a 241-residue protein sequence, read N- to C-terminus: 3-dehydroquinate dehydratase (241 aa).

3-dehydroquinate-binding positions include 35-37 (ELR) and Arg-70. The Proton donor/acceptor role is filled by His-133. Residue Lys-160 is the Schiff-base intermediate with substrate of the active site. The 3-dehydroquinate site is built by Arg-202 and Gln-225.

It belongs to the type-I 3-dehydroquinase family. As to quaternary structure, homodimer.

The catalysed reaction is 3-dehydroquinate = 3-dehydroshikimate + H2O. The protein operates within metabolic intermediate biosynthesis; chorismate biosynthesis; chorismate from D-erythrose 4-phosphate and phosphoenolpyruvate: step 3/7. Involved in the third step of the chorismate pathway, which leads to the biosynthesis of aromatic amino acids. Catalyzes the cis-dehydration of 3-dehydroquinate (DHQ) and introduces the first double bond of the aromatic ring to yield 3-dehydroshikimate. The protein is 3-dehydroquinate dehydratase of Staphylococcus haemolyticus (strain JCSC1435).